The following is a 164-amino-acid chain: SsrA-binding protein (164 aa).

The interval 143–164 is disordered; the sequence is HDKRQDEKQKSIKKEINSVLKR. Basic and acidic residues predominate over residues 145-158; sequence KRQDEKQKSIKKEI.

It belongs to the SmpB family.

It is found in the cytoplasm. In terms of biological role, required for rescue of stalled ribosomes mediated by trans-translation. Binds to transfer-messenger RNA (tmRNA), required for stable association of tmRNA with ribosomes. tmRNA and SmpB together mimic tRNA shape, replacing the anticodon stem-loop with SmpB. tmRNA is encoded by the ssrA gene; the 2 termini fold to resemble tRNA(Ala) and it encodes a 'tag peptide', a short internal open reading frame. During trans-translation Ala-aminoacylated tmRNA acts like a tRNA, entering the A-site of stalled ribosomes, displacing the stalled mRNA. The ribosome then switches to translate the ORF on the tmRNA; the nascent peptide is terminated with the 'tag peptide' encoded by the tmRNA and targeted for degradation. The ribosome is freed to recommence translation, which seems to be the essential function of trans-translation. The protein is SsrA-binding protein of Prochlorococcus marinus (strain MIT 9312).